Reading from the N-terminus, the 525-residue chain is Lymphocyte activation gene 3 protein (525 aa).

An N-terminal signal peptide occupies residues 1 to 23; it reads MRQDLFLDLLLLQLLWEAPVVSS. Over 24–442 the chain is Extracellular; sequence GPGKELSVVW…ISGDLKGGHL (419 aa). Residues 37 to 163 enclose the Ig-like V-type domain; the sequence is GAPVHLPCSL…FSCSLRLRVG (127 aa). The interaction with FGL1 stretch occupies residues 37–246; sequence GAPVHLPCSL…LTYRDGFNVS (210 aa). An intrachain disulfide couples Cys44 to Cys156. Ig-like C2-type domains are found at residues 164–246, 258–341, and 345–412; these read QASM…FNVS, PVAP…AAVT, and ITVT…EGQK. N-linked (GlcNAc...) asparagine glycosylation is present at Asn184. A disulfide bridge links Cys185 with Cys235. N-linked (GlcNAc...) asparagine glycans are attached at residues Asn244 and Asn309. Intrachain disulfides connect Cys276–Cys327 and Cys363–Cys405. A connecting peptide region spans residues 422-442; it reads ESSSGAWSAKRISGDLKGGHL. The helical transmembrane segment at 443–463 threads the bilayer; sequence FLSLILGALALFLLVTGAFGF. Topologically, residues 464–525 are cytoplasmic; that stretch reads HLWRRQLLRR…PELEPESRQL (62 aa). A disordered region spans residues 486 to 525; that stretch reads PVQSKIEELEREPETEMEPETEPDPEPQPEPELEPESRQL. A KIEELE motif motif is present at residues 490-495; that stretch reads KIEELE. A compositionally biased stretch (basic and acidic residues) spans 490-499; it reads KIEELEREPE. The tract at residues 493–522 is 15 X 2 AA tandem repeats of E-X; sequence ELEREPETEMEPETEPDPEPQPEPELEPES. Positions 500-519 are enriched in acidic residues; the sequence is TEMEPETEPDPEPQPEPELE.

This sequence belongs to the LAG3 family. As to quaternary structure, interacts with MHC class II (MHC-II); selectively recognizes stable complexes of peptide and MHC-II. Interacts with FGL1 (via the Fibrinogen C-terminal domain). Post-translationally, proteolytically cleaved by ADAM10 and ADAM17 within the connecting peptide region, leading to release of Secreted lymphocyte activation gene 3 protein (sLAG-3). ADAM10 mediates constitutive cleavage, but cleavage increases following T-cell activation, whereas shedding by ADAM17 is induced by TCR signaling in a PRKCQ-dependent manner.

The protein localises to the cell membrane. It is found in the secreted. Lymphocyte activation gene 3 protein: Inhibitory receptor on antigen activated T-cells. Delivers inhibitory signals upon binding to ligands, such as FGL1. FGL1 constitutes a major ligand of LAG3 and is responsible for LAG3 T-cell inhibitory function. Following TCR engagement, LAG3 associates with CD3-TCR in the immunological synapse and directly inhibits T-cell activation. May inhibit antigen-specific T-cell activation in synergy with PDCD1/PD-1, possibly by acting as a coreceptor for PDCD1/PD-1. Negatively regulates the proliferation, activation, effector function and homeostasis of both CD8(+) and CD4(+) T-cells. Also mediates immune tolerance: constitutively expressed on a subset of regulatory T-cells (Tregs) and contributes to their suppressive function. Also acts as a negative regulator of plasmacytoid dendritic cell (pDCs) activation. Binds MHC class II (MHC-II); the precise role of MHC-II-binding is however unclear. Its function is as follows. May function as a ligand for MHC class II (MHC-II) on antigen-presenting cells (APC), promoting APC activation/maturation and driving Th1 immune response. This Rattus norvegicus (Rat) protein is Lymphocyte activation gene 3 protein (Lag3).